A 76-amino-acid chain; its full sequence is Exodeoxyribonuclease 7 small subunit (76 aa).

It belongs to the XseB family. In terms of assembly, heterooligomer composed of large and small subunits.

It localises to the cytoplasm. The catalysed reaction is Exonucleolytic cleavage in either 5'- to 3'- or 3'- to 5'-direction to yield nucleoside 5'-phosphates.. Bidirectionally degrades single-stranded DNA into large acid-insoluble oligonucleotides, which are then degraded further into small acid-soluble oligonucleotides. This Geobacter metallireducens (strain ATCC 53774 / DSM 7210 / GS-15) protein is Exodeoxyribonuclease 7 small subunit.